A 221-amino-acid polypeptide reads, in one-letter code: Translation initiation factor 6 (221 aa).

Belongs to the eIF-6 family.

Its function is as follows. Binds to the 50S ribosomal subunit and prevents its association with the 30S ribosomal subunit to form the 70S initiation complex. In Halorubrum lacusprofundi (strain ATCC 49239 / DSM 5036 / JCM 8891 / ACAM 34), this protein is Translation initiation factor 6.